Here is a 924-residue protein sequence, read N- to C-terminus: Cell division control protein 13 (924 aa).

Residues 265–336 (PTTDISNMGE…KRKRKLSFHS (72 aa)) are disordered. The segment covering 295-308 (GKYFSSKSYIQSQT) has biased composition (polar residues). Residue Ser306 is modified to Phosphoserine. Thr308 carries the phosphothreonine modification. The span at 309-326 (PERKTSVPNNWHDDDSGS) shows a compositional bias: basic and acidic residues. At Ser333 the chain carries Phosphoserine. The OB DNA-binding region spans 500 to 686 (KMARKDPTIE…FEEYRRFFPI (187 aa)).

As to quaternary structure, interacts with POL1, EST1, FUN12, STM1, STN1 and TEN1.

Its subcellular location is the chromosome. The protein localises to the telomere. Single-stranded telomeric DNA-binding protein that regulates telomere replication. Has a role in both positive and negative regulation. Promotes [TG(1-3)] strand lengthening via interaction with EST1. Promotes [C(1-3)A] strand re-synthesis by DNA polymerase alpha via interaction with POL1. Negatively regulates telomere elongation of the G strand via binding with STN1 thereby inhibiting telomerase activity. The polypeptide is Cell division control protein 13 (CDC13) (Saccharomyces cerevisiae (strain ATCC 204508 / S288c) (Baker's yeast)).